An 84-amino-acid chain; its full sequence is Putative membrane protein insertion efficiency factor (84 aa).

Belongs to the UPF0161 family.

Its subcellular location is the cell inner membrane. Its function is as follows. Could be involved in insertion of integral membrane proteins into the membrane. In Shewanella baltica (strain OS195), this protein is Putative membrane protein insertion efficiency factor.